The sequence spans 357 residues: Cholinesterase 1 (357 aa).

Ser112 serves as the catalytic Acyl-ester intermediate. Cys166 and Cys179 are oxidised to a cystine. Active-site charge relay system residues include Glu244 and His357.

This sequence belongs to the type-B carboxylesterase/lipase family.

The catalysed reaction is an acylcholine + H2O = a carboxylate + choline + H(+). This Branchiostoma lanceolatum (Common lancelet) protein is Cholinesterase 1 (CHE1).